The chain runs to 143 residues: Transcriptional regulator MraZ (143 aa).

2 SpoVT-AbrB domains span residues 5 to 47 (EYQH…PKEE) and 76 to 119 (AGEC…SRER).

The protein belongs to the MraZ family. As to quaternary structure, forms oligomers.

The protein resides in the cytoplasm. It is found in the nucleoid. This chain is Transcriptional regulator MraZ, found in Heliobacterium modesticaldum (strain ATCC 51547 / Ice1).